Here is a 428-residue protein sequence, read N- to C-terminus: G2/mitotic-specific cyclin-B (428 aa).

It belongs to the cyclin family. Cyclin AB subfamily. Interacts with the CDC2 protein kinase to form a serine/threonine kinase holoenzyme complex also known as maturation promoting factor (MPF). The cyclin subunit imparts substrate specificity to the complex.

Functionally, essential for the control of the cell cycle at the G2/M (mitosis) transition. The polypeptide is G2/mitotic-specific cyclin-B (Spisula solidissima (Atlantic surf-clam)).